The primary structure comprises 398 residues: Lysophospholipid transporter LplT (398 aa).

The next 12 membrane-spanning stretches (helical) occupy residues Val19 to Ala39, Val53 to Ala73, Ile96 to Tyr116, Leu139 to Ala159, Ile164 to Ile184, Ser195 to Trp213, Leu227 to Leu247, Tyr257 to Val277, Thr281 to Leu301, Ala304 to Val324, Asn352 to Ala372, and Val373 to Trp393.

This sequence belongs to the major facilitator superfamily. LplT (TC 2.A.1.42) family.

Its subcellular location is the cell inner membrane. In terms of biological role, catalyzes the facilitated diffusion of 2-acyl-glycero-3-phosphoethanolamine (2-acyl-GPE) into the cell. The protein is Lysophospholipid transporter LplT of Salmonella arizonae (strain ATCC BAA-731 / CDC346-86 / RSK2980).